A 228-amino-acid chain; its full sequence is uncharacterized protein (228 aa).

6 consecutive transmembrane segments (helical) span residues 14–34, 53–73, 108–128, 148–168, 178–198, and 200–220; these read GWYI…MWLI, FLII…VLIV, GLTF…FFWL, AVKM…PIFF, TIIS…GFSI, and SVVY…YMAI.

It is found in the cell membrane. This is an uncharacterized protein from Bacillus subtilis (strain 168).